A 356-amino-acid chain; its full sequence is Alanine racemase (356 aa).

Lysine 35 serves as the catalytic Proton acceptor; specific for D-alanine. Lysine 35 carries the post-translational modification N6-(pyridoxal phosphate)lysine. Arginine 130 provides a ligand contact to substrate. Catalysis depends on tyrosine 253, which acts as the Proton acceptor; specific for L-alanine. Methionine 301 is a binding site for substrate.

This sequence belongs to the alanine racemase family. It depends on pyridoxal 5'-phosphate as a cofactor.

It carries out the reaction L-alanine = D-alanine. Its pathway is amino-acid biosynthesis; D-alanine biosynthesis; D-alanine from L-alanine: step 1/1. Functionally, catalyzes the interconversion of L-alanine and D-alanine. May also act on other amino acids. The chain is Alanine racemase (alr) from Sodalis glossinidius (strain morsitans).